The chain runs to 439 residues: Tol-Pal system protein TolB (439 aa).

Positions 1–22 are cleaved as a signal peptide; that stretch reads MKKPLRWLAALTVLLLPLSALA.

It belongs to the TolB family. As to quaternary structure, the Tol-Pal system is composed of five core proteins: the inner membrane proteins TolA, TolQ and TolR, the periplasmic protein TolB and the outer membrane protein Pal. They form a network linking the inner and outer membranes and the peptidoglycan layer.

It localises to the periplasm. Part of the Tol-Pal system, which plays a role in outer membrane invagination during cell division and is important for maintaining outer membrane integrity. The protein is Tol-Pal system protein TolB of Xanthomonas oryzae pv. oryzae (strain KACC10331 / KXO85).